A 502-amino-acid polypeptide reads, in one-letter code: Cytochrome P450 3A40 (502 aa).

Heme is bound at residue cysteine 443.

Belongs to the cytochrome P450 family. It depends on heme as a cofactor.

The protein resides in the endoplasmic reticulum membrane. It is found in the microsome membrane. It catalyses the reaction an organic molecule + reduced [NADPH--hemoprotein reductase] + O2 = an alcohol + oxidized [NADPH--hemoprotein reductase] + H2O + H(+). This chain is Cytochrome P450 3A40 (cyp3a40), found in Oryzias latipes (Japanese rice fish).